Consider the following 272-residue polypeptide: Dermonecrotic toxin StSicTox-betaIC1 (272 aa).

Residue H5 is part of the active site. Residues E25 and D27 each coordinate Mg(2+). H41 functions as the Nucleophile in the catalytic mechanism. Intrachain disulfides connect C45–C51 and C47–C191. D85 lines the Mg(2+) pocket.

This sequence belongs to the arthropod phospholipase D family. Class II subfamily. Class IIb sub-subfamily. The cofactor is Mg(2+). Expressed by the venom gland.

Its subcellular location is the secreted. The catalysed reaction is an N-(acyl)-sphingosylphosphocholine = an N-(acyl)-sphingosyl-1,3-cyclic phosphate + choline. The enzyme catalyses N-hexanoyl-sphing-4-enine-1-phosphocholine = N-(hexanoyl)-sphing-4-enine-1,3-cyclic phosphate + choline. It catalyses the reaction an N-(acyl)-sphingosylphosphoethanolamine = an N-(acyl)-sphingosyl-1,3-cyclic phosphate + ethanolamine. It carries out the reaction N-dodecanoyl-heptadecasphing-4-enine-1-phosphoethanolamine = N-dodecanoyl-heptadecasphing-4-enine-1,3-cyclic phosphate + ethanolamine. The catalysed reaction is a 1-acyl-sn-glycero-3-phosphoethanolamine = a 1-acyl-sn-glycero-2,3-cyclic phosphate + ethanolamine. The enzyme catalyses 1-tetradecanoyl-sn-glycero-3-phosphoethanolamine = 1-tetradecanoyl-sn-glycero-2,3-cyclic phosphate + ethanolamine. Its function is as follows. Dermonecrotic toxins cleave the phosphodiester linkage between the phosphate and headgroup of certain phospholipids (sphingolipid and lysolipid substrates), forming an alcohol (often choline) and a cyclic phosphate. This toxin acts on lysophosphatidylethanolamine (LPE) and ceramide phosphoethanolamine (CPE) with high activity. This toxin acts on sphingomyelin (SM) with very low activity and is not active on lysophosphatidylserine (LPS), lysophosphatidylcholine (LPC) and lysophosphatidylglycerol (LPG). It acts by transphosphatidylation, releasing exclusively cyclic phosphate as second products. It is not surprising that spider toxins have affinity for ethanolamine-containing sphingolipids since they are common in insect prey. Induces dermonecrosis, hemolysis, increased vascular permeability, edema, inflammatory response, and platelet aggregation. This is Dermonecrotic toxin StSicTox-betaIC1 from Sicarius terrosus (Cave spider).